The following is a 1014-amino-acid chain: DNA translocase FtsK 2 (1014 aa).

A helical transmembrane segment spans residues 1 to 21 (MFWIVLIVILLLALAGLFFVR). 3 disordered regions span residues 89-142 (ESEP…EDIA), 283-318 (RHAG…RRRV), and 487-525 (SQAV…AVSE). The segment covering 121 to 140 (EEAETEEAEAAEEEAADTED) has biased composition (acidic residues). The segment covering 298–307 (DVSQGQSVSD) has biased composition (polar residues). The 210-residue stretch at 662-871 (GQPVVTDLGK…FQVSSKIDSR (210 aa)) folds into the FtsK domain. Residue 682–687 (GSGKSV) participates in ATP binding.

This sequence belongs to the FtsK/SpoIIIE/SftA family. In terms of assembly, homohexamer. Forms a ring that surrounds DNA.

The protein resides in the cell inner membrane. Functionally, essential cell division protein that coordinates cell division and chromosome segregation. The N-terminus is involved in assembly of the cell-division machinery. The C-terminus functions as a DNA motor that moves dsDNA in an ATP-dependent manner towards the dif recombination site, which is located within the replication terminus region. Translocation stops specifically at Xer-dif sites, where FtsK interacts with the Xer recombinase, allowing activation of chromosome unlinking by recombination. FtsK orienting polar sequences (KOPS) guide the direction of DNA translocation. FtsK can remove proteins from DNA as it translocates, but translocation stops specifically at XerCD-dif site, thereby preventing removal of XerC and XerD from dif. This chain is DNA translocase FtsK 2 (ftsK2), found in Neisseria meningitidis serogroup A / serotype 4A (strain DSM 15465 / Z2491).